Here is a 210-residue protein sequence, read N- to C-terminus: Putative truncated L-serine dehydratase SDL1 (210 aa).

This sequence belongs to the serine/threonine dehydratase family. Pyridoxal 5'-phosphate is required as a cofactor.

The protein resides in the cytoplasm. The catalysed reaction is L-serine = pyruvate + NH4(+). Its pathway is carbohydrate biosynthesis; gluconeogenesis. This Saccharomyces cerevisiae (strain ATCC 204508 / S288c) (Baker's yeast) protein is Putative truncated L-serine dehydratase SDL1 (SDL1).